The primary structure comprises 188 residues: MLDKLVAQYSAIIESLGEDVNREGLRDTPKRAAKAMQFLCRGYNQSLEEVTNGAVFESDTDEMVLVKDIELYSLCEHHLLPFIGRCHIAYIPNGKVLGLSKFARIVDMFARRMQIQENLTRQIAEAVLEVTNAHGVGVIIEARHMCMMMRGVEKQNSVMSSSVMLGSMRNNPSTRSEFLTLVHSRRAL.

Positions 75, 78, and 146 each coordinate Zn(2+).

This sequence belongs to the GTP cyclohydrolase I family. In terms of assembly, toroid-shaped homodecamer, composed of two pentamers of five dimers.

It carries out the reaction GTP + H2O = 7,8-dihydroneopterin 3'-triphosphate + formate + H(+). It functions in the pathway cofactor biosynthesis; 7,8-dihydroneopterin triphosphate biosynthesis; 7,8-dihydroneopterin triphosphate from GTP: step 1/1. The sequence is that of GTP cyclohydrolase 1 from Hahella chejuensis (strain KCTC 2396).